A 756-amino-acid chain; its full sequence is Membrane-anchored protein 1 (756 aa).

A signal peptide spans 1–24; it reads MIRNTLAFLAILFLLIPTALLIIG. N-linked (GlcNAc...) asparagine glycosylation is found at N52 and N64. 3 helical membrane-spanning segments follow: residues 91 to 111, 120 to 140, and 148 to 168; these read IISA…IFLV, IIVV…ELVL, and QSYV…ALCL. N-linked (GlcNAc...) asparagine glycosylation is present at N190. Residues 281 to 328 form a disordered region; sequence YDEFRKSESSPSRSSVLSTSKPEVHETEGYCPHKTGNRPGFPSLNIPR. The segment covering 289–300 has biased composition (low complexity); the sequence is SSPSRSSVLSTS. 2 N-linked (GlcNAc...) asparagine glycosylation sites follow: N396 and N407. The segment at 427–453 is disordered; that stretch reads EPPATRMPQTRSPVNDHSSFPSDLPIK. Over residues 433-447 the composition is skewed to polar residues; sequence MPQTRSPVNDHSSFP. Position 438 is a phosphoserine (S438). Residues N459, N470, N471, N496, N497, N521, N522, N547, N548, N573, N574, N594, N598, N599, N618, N623, N649, N664, N676, and N685 are each glycosylated (N-linked (GlcNAc...) asparagine). Positions 482 to 650 are disordered; it reads MLKNVGNGPR…MPTSPNSRNN (169 aa). The span at 485–520 shows a compositional bias: low complexity; the sequence is NVGNGPRNAPRNNSSNNLHAQGGMPMNMRGPRGAPR. Composition is skewed to polar residues over residues 593 to 605, 617 to 629, and 640 to 650; these read RNTS…SEFN, RNAS…TDLF, and GMPTSPNSRNN. Residues 686–697 show a composition bias toward polar residues; it reads GSRNPSHGSLNT. Residues 686 to 713 are disordered; sequence GSRNPSHGSLNTAHAGMGYGPRSMMRDP. An N-linked (GlcNAc...) asparagine glycan is attached at N715. Positions 735–756 are disordered; that stretch reads FELPVRGNRNNRRGPGGNRMIR.

To yeast YOL019W and YMR063W.

The protein localises to the cell membrane. It is found in the cell tip. Functionally, required for correct cell separation at high temperatures. In Schizosaccharomyces pombe (strain 972 / ATCC 24843) (Fission yeast), this protein is Membrane-anchored protein 1 (mac1).